Reading from the N-terminus, the 868-residue chain is Translation initiation factor IF-2 (868 aa).

Composition is skewed to basic and acidic residues over residues 156 to 166 (ETVKEEEKINS) and 199 to 209 (SKKEEVKPEKV). 2 disordered regions span residues 156-177 (ETVK…QDEL) and 199-269 (SKKE…KYRE). Positions 249-260 (RGGRSKFKKKKG) are enriched in basic residues. In terms of domain architecture, tr-type G spans 368-537 (GRAPVVTIMG…LLQSEVLELK (170 aa)). The segment at 377-384 (GHVDHGKT) is G1. 377–384 (GHVDHGKT) is a binding site for GTP. Residues 402–406 (GITQH) form a G2 region. The interval 423 to 426 (DTPG) is G3. GTP-binding positions include 423–427 (DTPGH) and 477–480 (NKMD). Residues 477–480 (NKMD) are G4. Residues 513–515 (SAK) form a G5 region.

It belongs to the TRAFAC class translation factor GTPase superfamily. Classic translation factor GTPase family. IF-2 subfamily.

The protein resides in the cytoplasm. Its function is as follows. One of the essential components for the initiation of protein synthesis. Protects formylmethionyl-tRNA from spontaneous hydrolysis and promotes its binding to the 30S ribosomal subunits. Also involved in the hydrolysis of GTP during the formation of the 70S ribosomal complex. This chain is Translation initiation factor IF-2, found in Legionella pneumophila subsp. pneumophila (strain Philadelphia 1 / ATCC 33152 / DSM 7513).